We begin with the raw amino-acid sequence, 99 residues long: uncharacterized protein (99 aa).

The disordered stretch occupies residues 1–99 (MSDFPPSYQQ…KYHSKSDVGF (99 aa)). Over residues 19 to 29 (QESSTSNNASE) the composition is skewed to polar residues.

This is an uncharacterized protein from Schizosaccharomyces pombe (strain 972 / ATCC 24843) (Fission yeast).